The following is a 267-amino-acid chain: NAD kinase 2 (267 aa).

Aspartate 52 serves as the catalytic Proton acceptor. NAD(+)-binding positions include aspartate 52 to alanine 53, asparagine 124 to glutamate 125, arginine 151, aspartate 153, threonine 164 to serine 169, and alanine 188.

This sequence belongs to the NAD kinase family. It depends on a divalent metal cation as a cofactor.

It is found in the cytoplasm. It carries out the reaction NAD(+) + ATP = ADP + NADP(+) + H(+). Functionally, involved in the regulation of the intracellular balance of NAD and NADP, and is a key enzyme in the biosynthesis of NADP. Catalyzes specifically the phosphorylation on 2'-hydroxyl of the adenosine moiety of NAD to yield NADP. The polypeptide is NAD kinase 2 (Bacillus anthracis).